A 37-amino-acid chain; its full sequence is uncharacterized protein (37 aa).

The helical transmembrane segment at 13 to 33 (TFLTIIVLLMIVFGIAIVALL) threads the bilayer.

The protein resides in the host membrane. This is an uncharacterized protein from Acidianus convivator (ABV).